The following is a 95-amino-acid chain: Integration host factor subunit beta (95 aa).

It belongs to the bacterial histone-like protein family. As to quaternary structure, heterodimer of an alpha and a beta chain.

Functionally, this protein is one of the two subunits of integration host factor, a specific DNA-binding protein that functions in genetic recombination as well as in transcriptional and translational control. The chain is Integration host factor subunit beta from Shewanella putrefaciens (strain CN-32 / ATCC BAA-453).